The chain runs to 101 residues: Urease subunit beta (101 aa).

The protein belongs to the urease beta subunit family. In terms of assembly, heterotrimer of UreA (gamma), UreB (beta) and UreC (alpha) subunits. Three heterotrimers associate to form the active enzyme.

It localises to the cytoplasm. The catalysed reaction is urea + 2 H2O + H(+) = hydrogencarbonate + 2 NH4(+). It functions in the pathway nitrogen metabolism; urea degradation; CO(2) and NH(3) from urea (urease route): step 1/1. In Verminephrobacter eiseniae (strain EF01-2), this protein is Urease subunit beta.